A 1329-amino-acid chain; its full sequence is Putative protein tag-53 (1329 aa).

Residues 65–92 form the EGF-like 1 domain; that stretch reads SCDKPCYNGVCLNKACVCSKGWYGSQCD. Disulfide bonds link Cys66–Cys75, Cys70–Cys80, Cys82–Cys91, Cys94–Cys120, and Cys144–Cys166. The CUB domain maps to 94–203; that stretch reads CFGRIRISDN…NGFNVSYESN (110 aa). The N-linked (GlcNAc...) asparagine glycan is linked to Asn103. 2 N-linked (GlcNAc...) asparagine glycosylation sites follow: Asn197 and Asn208. 2 consecutive EGF-like domains span residues 204–232 and 235–270; these read RCAY…LNCE and VCQL…ETCQ. 6 disulfide bridges follow: Cys205–Cys215, Cys209–Cys220, Cys222–Cys231, Cys236–Cys252, Cys247–Cys257, and Cys259–Cys269. Kelch repeat units lie at residues 302–353, 355–408, 416–463, 471–518, 520–575, and 577–619; these read VVWS…KYKN, LYMF…VAGH, EMFV…AVEY, AILV…YLNG, MVVV…VIGQ, and LYAL…KCVF. 6 N-linked (GlcNAc...) asparagine glycosylation sites follow: Asn324, Asn395, Asn447, Asn481, Asn529, and Asn555. Asn820 is a glycosylation site (N-linked (GlcNAc...) asparagine). The N-linked (GlcNAc...) asparagine; atypical glycan is linked to Asn832. 2 N-linked (GlcNAc...) asparagine glycosylation sites follow: Asn833 and Asn934. 8 disulfide bridges follow: Cys945/Cys953, Cys947/Cys968, Cys971/Cys980, Cys983/Cys997, Cys1000/Cys1009, Cys1002/Cys1016, Cys1018/Cys1028, and Cys1031/Cys1045. 2 consecutive Laminin EGF-like domains span residues 945–999 and 1000–1047; these read CQCN…VCSP and CDCH…PCFY. The EGF-like 4 domain maps to 952–998; it reads TCFTSVGSFPPVTIEKCQSCQNHTTGAHCERCAPGFYGDARNGGVCS. N-linked (GlcNAc...) asparagine glycosylation is present at Asn973. Asn1066, Asn1102, and Asn1147 each carry an N-linked (GlcNAc...) asparagine glycan. A helical transmembrane segment spans residues 1176–1196; that stretch reads VLFFVIFAACFIVLLVVAGLL. The Cytoplasmic segment spans residues 1197–1329; that stretch reads WMIKVRIEAY…TIRQRPNNND (133 aa).

It is found in the membrane. The chain is Putative protein tag-53 (tag-53) from Caenorhabditis elegans.